A 472-amino-acid polypeptide reads, in one-letter code: uncharacterized protein (472 aa).

6 consecutive transmembrane segments (helical) span residues 4–24 (IIIL…FSVI), 27–47 (APIC…LPFF), 56–76 (AGFI…GKVV), 99–119 (ILAI…LFVV), 140–160 (LIPG…LPGT), and 176–196 (IYAA…AGML). The disordered stretch occupies residues 209–229 (GEGYGGFDSQNAPAPESIESA). Residues 220 to 229 (APAPESIESA) are compositionally biased toward low complexity. The next 5 helical transmembrane spans lie at 240–260 (ALAF…TIYL), 286–306 (AAAI…TILF), 323–343 (IGGA…GGII), 372–392 (TALA…LSAM), and 448–468 (IFAI…IYSL).

Belongs to the CitM (TC 2.A.11) transporter family.

Its subcellular location is the cell membrane. This is an uncharacterized protein from Bacillus subtilis (strain 168).